The chain runs to 298 residues: Triosephosphate isomerase, chloroplastic (298 aa).

Residues 1–18 (MAARRPSPPPASPPPPRP) are compositionally biased toward pro residues. Residues 1–32 (MAARRPSPPPASPPPPRPRSTTTTRTTSSASA) are disordered. The N-terminal 43 residues, 1-43 (MAARRPSPPPASPPPPRPRSTTTTRTTSSASAAPAAAQRLVAM), are a transit peptide targeting the chloroplast. Residues 19 to 32 (RSTTTTRTTSSASA) show a composition bias toward low complexity. Substrate-binding residues include asparagine 54 and lysine 56. Histidine 138 serves as the catalytic Electrophile. Cysteine 186 is modified (cysteine derivative). Residue glutamate 208 is the Proton acceptor of the active site.

It belongs to the triosephosphate isomerase family. As to quaternary structure, homodimer.

It localises to the plastid. It is found in the chloroplast. It carries out the reaction D-glyceraldehyde 3-phosphate = dihydroxyacetone phosphate. It functions in the pathway carbohydrate biosynthesis; Calvin cycle. The protein is Triosephosphate isomerase, chloroplastic of Secale cereale (Rye).